The primary structure comprises 260 residues: Methanethiol S-methyltransferase (260 aa).

Helical transmembrane passes span 27-47 (CYLF…GIGV), 55-75 (PGIT…LFAA), 107-127 (CLVL…VWNV), 134-154 (GLLI…TFLI), and 196-216 (FLIA…FAIL).

This sequence belongs to the nurim family.

The protein localises to the membrane. The enzyme catalyses methanethiol + S-adenosyl-L-methionine = dimethyl sulfide + S-adenosyl-L-homocysteine + H(+). Its function is as follows. Catalyzes the methylation of methanethiol (MeSH) to yield dimethylsulphide (DMS). This is Methanethiol S-methyltransferase from Pseudomonas sp. (strain GM41(2012)).